An 88-amino-acid chain; its full sequence is Large ribosomal subunit protein bL31B (88 aa).

It belongs to the bacterial ribosomal protein bL31 family. Type B subfamily. Part of the 50S ribosomal subunit.

The polypeptide is Large ribosomal subunit protein bL31B (Herminiimonas arsenicoxydans).